A 400-amino-acid polypeptide reads, in one-letter code: Nicotinate phosphoribosyltransferase (400 aa).

Phosphohistidine; by autocatalysis is present on histidine 220.

The protein belongs to the NAPRTase family. Transiently phosphorylated on a His residue during the reaction cycle. Phosphorylation strongly increases the affinity for substrates and increases the rate of nicotinate D-ribonucleotide production. Dephosphorylation regenerates the low-affinity form of the enzyme, leading to product release.

It catalyses the reaction nicotinate + 5-phospho-alpha-D-ribose 1-diphosphate + ATP + H2O = nicotinate beta-D-ribonucleotide + ADP + phosphate + diphosphate. The protein operates within cofactor biosynthesis; NAD(+) biosynthesis; nicotinate D-ribonucleotide from nicotinate: step 1/1. In terms of biological role, catalyzes the synthesis of beta-nicotinate D-ribonucleotide from nicotinate and 5-phospho-D-ribose 1-phosphate at the expense of ATP. The polypeptide is Nicotinate phosphoribosyltransferase (Escherichia coli O45:K1 (strain S88 / ExPEC)).